A 224-amino-acid polypeptide reads, in one-letter code: Adenylate kinase (224 aa).

Residue 10–15 (GSGKST) participates in ATP binding. Residues 30–59 (SSGDLIRREIERKSSLGREMEAYLSRGDLI) form an NMP region. AMP-binding positions include Ser-31, Arg-36, 57-59 (DLI), 83-86 (GYPR), and Gln-90. Residues 124–161 (GRRICPNCGAVYHVKYNPPKVPGICDVCGSELIQRADD) are LID. Residue Arg-125 participates in ATP binding. Zn(2+) is bound by residues Cys-128 and Cys-131. An ATP-binding site is contributed by 134-135 (VY). Cys-148 and Cys-151 together coordinate Zn(2+). Residues Arg-158 and Arg-169 each coordinate AMP. Gly-197 is an ATP binding site.

The protein belongs to the adenylate kinase family. In terms of assembly, monomer.

It is found in the cytoplasm. The enzyme catalyses AMP + ATP = 2 ADP. The protein operates within purine metabolism; AMP biosynthesis via salvage pathway; AMP from ADP: step 1/1. Functionally, catalyzes the reversible transfer of the terminal phosphate group between ATP and AMP. Plays an important role in cellular energy homeostasis and in adenine nucleotide metabolism. This Thermococcus kodakarensis (strain ATCC BAA-918 / JCM 12380 / KOD1) (Pyrococcus kodakaraensis (strain KOD1)) protein is Adenylate kinase.